Here is a 232-residue protein sequence, read N- to C-terminus: Charged multivesicular body protein 4c (232 aa).

Disordered stretches follow at residues 1–23 (MSKL…PSAQ) and 172–232 (EQEE…AWAT). The segment at 1-153 (MSKLGKFFKG…EISEAFSQRV (153 aa)) is intramolecular interaction with C-terminus. A compositionally biased stretch (low complexity) spans 11-23 (SRSSRARAAPSAQ). Coiled-coil stretches lie at residues 21 to 50 (SAQE…IQRE) and 125 to 182 (LNKI…KMTS). The segment at 154–232 (QFADGFDEDE…DFKQLAAWAT (79 aa)) is intramolecular interaction with N-terminus. Phosphoserine; by AURKB is present on serine 210.

This sequence belongs to the SNF7 family. Probable core component of the endosomal sorting required for transport complex III (ESCRT-III). ESCRT-III components are thought to multimerize to form a flat lattice on the perimeter membrane of the endosome. Several assembly forms of ESCRT-III may exist that interact and act sequentially. Self-associates. Interacts with CHMP2A. Interacts with CHMP4A. Interacts with CHMP4B. Interacts with CHMP6. Interacts with VPS4A. Interacts with PDCD6IP; the interaction is direct. Phosphorylated at Ser-210 by AURKB during cytokinesis: together with ZFYVE19/ANCHR, phosphorylated CHMP4C retains abscission-competent VPS4 (VPS4A and/or VPS4B) at the midbody ring until abscission checkpoint signaling is terminated at late cytokinesis.

The protein resides in the cytoplasm. It is found in the cytosol. It localises to the late endosome membrane. Its subcellular location is the midbody. The protein localises to the midbody ring. Functionally, probable core component of the endosomal sorting required for transport complex III (ESCRT-III) which is involved in multivesicular bodies (MVBs) formation and sorting of endosomal cargo proteins into MVBs. MVBs contain intraluminal vesicles (ILVs) that are generated by invagination and scission from the limiting membrane of the endosome and mostly are delivered to lysosomes enabling degradation of membrane proteins, such as stimulated growth factor receptors, lysosomal enzymes and lipids. The MVB pathway appears to require the sequential function of ESCRT-O, -I,-II and -III complexes. ESCRT-III proteins mostly dissociate from the invaginating membrane before the ILV is released. The ESCRT machinery also functions in topologically equivalent membrane fission events, such as the terminal stages of cytokinesis. Key component of the cytokinesis checkpoint, a process required to delay abscission to prevent both premature resolution of intercellular chromosome bridges and accumulation of DNA damage: upon phosphorylation by AURKB, together with ZFYVE19/ANCHR, retains abscission-competent VPS4 (VPS4A and/or VPS4B) at the midbody ring until abscission checkpoint signaling is terminated at late cytokinesis. Deactivation of AURKB results in dephosphorylation of CHMP4C followed by its dissociation from ANCHR and VPS4 and subsequent abscission. ESCRT-III proteins are believed to mediate the necessary vesicle extrusion and/or membrane fission activities, possibly in conjunction with the AAA ATPase VPS4. CHMP4A/B/C are required for the exosomal release of SDCBP, CD63 and syndecan. The protein is Charged multivesicular body protein 4c (Chmp4c) of Rattus norvegicus (Rat).